Consider the following 258-residue polypeptide: Venom plasminogen activator Haly-PA (258 aa).

The N-terminal stretch at 1–18 (MALIRVLANLLILQLSYA) is a signal peptide. Positions 19 to 24 (QKSSEL) are excised as a propeptide. In terms of domain architecture, Peptidase S1 spans 25-249 (VVGGDECNIN…HLDWIKSIIA (225 aa)). Cystine bridges form between cysteine 31/cysteine 163, cysteine 50/cysteine 66, cysteine 98/cysteine 256, cysteine 142/cysteine 210, cysteine 174/cysteine 189, and cysteine 200/cysteine 225. An N-linked (GlcNAc...) asparagine glycan is attached at asparagine 44. Residues histidine 65 and aspartate 110 each act as charge relay system in the active site. The Charge relay system role is filled by serine 204.

Belongs to the peptidase S1 family. Snake venom subfamily. In terms of assembly, monomer. In terms of processing, glycosylated. Expressed by the venom gland.

It is found in the secreted. Functionally, snake venom serine protease that activates plasminogen. Displays indirect fibrino(geno)lytic activity through conversion of plasminogen to plasmin. Shows a preferential cleavage at Arg-|-Xaa instead of Lys-|-Xaa bonds. This chain is Venom plasminogen activator Haly-PA, found in Gloydius brevicauda (Korean slamosa snake).